The primary structure comprises 282 residues: Phosphatidylserine decarboxylase proenzyme (282 aa).

Active-site charge relay system; for autoendoproteolytic cleavage activity residues include Asp89, His145, and Ser249. The active-site Schiff-base intermediate with substrate; via pyruvic acid; for decarboxylase activity is the Ser249. Position 249 is a pyruvic acid (Ser); by autocatalysis (Ser249).

This sequence belongs to the phosphatidylserine decarboxylase family. PSD-B subfamily. Prokaryotic type I sub-subfamily. Heterodimer of a large membrane-associated beta subunit and a small pyruvoyl-containing alpha subunit. The cofactor is pyruvate. Post-translationally, is synthesized initially as an inactive proenzyme. Formation of the active enzyme involves a self-maturation process in which the active site pyruvoyl group is generated from an internal serine residue via an autocatalytic post-translational modification. Two non-identical subunits are generated from the proenzyme in this reaction, and the pyruvate is formed at the N-terminus of the alpha chain, which is derived from the carboxyl end of the proenzyme. The autoendoproteolytic cleavage occurs by a canonical serine protease mechanism, in which the side chain hydroxyl group of the serine supplies its oxygen atom to form the C-terminus of the beta chain, while the remainder of the serine residue undergoes an oxidative deamination to produce ammonia and the pyruvoyl prosthetic group on the alpha chain. During this reaction, the Ser that is part of the protease active site of the proenzyme becomes the pyruvoyl prosthetic group, which constitutes an essential element of the active site of the mature decarboxylase.

Its subcellular location is the cell membrane. The enzyme catalyses a 1,2-diacyl-sn-glycero-3-phospho-L-serine + H(+) = a 1,2-diacyl-sn-glycero-3-phosphoethanolamine + CO2. It participates in phospholipid metabolism; phosphatidylethanolamine biosynthesis; phosphatidylethanolamine from CDP-diacylglycerol: step 2/2. Its function is as follows. Catalyzes the formation of phosphatidylethanolamine (PtdEtn) from phosphatidylserine (PtdSer). This chain is Phosphatidylserine decarboxylase proenzyme, found in Anaeromyxobacter sp. (strain K).